Reading from the N-terminus, the 224-residue chain is uncharacterized protein (224 aa).

This is an uncharacterized protein from Acanthamoeba polyphaga mimivirus (APMV).